We begin with the raw amino-acid sequence, 83 residues long: Cytochrome b559 subunit alpha (83 aa).

The helical transmembrane segment at 21 to 35 (VIHSITIPSLFIAGW) threads the bilayer. Histidine 23 contributes to the heme binding site.

Belongs to the PsbE/PsbF family. As to quaternary structure, heterodimer of an alpha subunit and a beta subunit. PSII is composed of 1 copy each of membrane proteins PsbA, PsbB, PsbC, PsbD, PsbE, PsbF, PsbH, PsbI, PsbJ, PsbK, PsbL, PsbM, PsbT, PsbX, PsbY, PsbZ, Psb30/Ycf12, at least 3 peripheral proteins of the oxygen-evolving complex and a large number of cofactors. It forms dimeric complexes. It depends on heme b as a cofactor.

It localises to the plastid. The protein resides in the chloroplast thylakoid membrane. Functionally, this b-type cytochrome is tightly associated with the reaction center of photosystem II (PSII). PSII is a light-driven water:plastoquinone oxidoreductase that uses light energy to abstract electrons from H(2)O, generating O(2) and a proton gradient subsequently used for ATP formation. It consists of a core antenna complex that captures photons, and an electron transfer chain that converts photonic excitation into a charge separation. The protein is Cytochrome b559 subunit alpha of Chara vulgaris (Common stonewort).